The following is a 112-amino-acid chain: Nitrogen regulatory protein P-II (112 aa).

Residue Tyr-51 is modified to O-UMP-tyrosine.

This sequence belongs to the P(II) protein family. In terms of assembly, homotrimer. Post-translationally, uridylylated/deuridylylated by GlnD.

Its function is as follows. P-II indirectly controls the transcription of the glutamine synthetase gene (GlnA). P-II prevents NR-II-catalyzed conversion of NR-I to NR-I-phosphate, the transcriptional activator of GlnA. When P-II is uridylylated to P-II-UMP, these events are reversed. When the ratio of Gln to 2-ketoglutarate decreases, P-II is uridylylated to P-II-UMP, which causes the deadenylation of glutamine synthetase by GlnE, so activating the enzyme. This is Nitrogen regulatory protein P-II (glnB) from Haemophilus influenzae (strain ATCC 51907 / DSM 11121 / KW20 / Rd).